We begin with the raw amino-acid sequence, 89 residues long: Huwentoxin-IV (89 aa).

An N-terminal signal peptide occupies residues 1–24; the sequence is MVNMKASMFLALAGLVLLFVVCYA. A propeptide spanning residues 25–52 is cleaved from the precursor; that stretch reads SESEEKEFSNELLSSVLAVDDNSKGEER. Glu53 bears the Pyrrolidone carboxylic acid (Glu); partial mark. Cystine bridges form between Cys54–Cys69, Cys61–Cys76, and Cys68–Cys83. Ile87 is modified (isoleucine amide).

The protein belongs to the neurotoxin 10 (Hwtx-1) family. 22 (Htx-4) subfamily. Two forms of huwentoxin-IV exist in the venom of H.schmidti, a non-N-terminally modified (HwTx-IV) and a naturally modified peptide with pyroglutamic acid residue at position 53 (mHwTx-IV). mHwTx-IV shows no observable difference with the unmodified toxin when applied to the TTX-S sodium channel of DRG neuron (IC(50)~50 nM) or when tested on hNav1.7/SCN9A (IC(50)=30.8 nM). In addition, similarly to the unmodified toxin, mHwTx-IV has only a weak affinity for lipid membranes. However, in contrast with HwTx-IV, which dissociates at moderate and high depolarization voltages (50-200 mV), mHwTx-IV inhibition of TTX-sensitive sodium channels is not reversed by strong depolarization voltages. Expressed by the venom gland.

Its subcellular location is the secreted. Functionally, this lethal neurotoxin (without cyclization at position 53) inhibits neuronal voltage-gated sodium channel Nav1.2/SCN2A (IC(50)=10-150 nM), rNav1.3/SCN3A (IC(50)=338 nM), Nav1.6/SCN8A (IC(50)=117 nM), and hNav1.7/SCN9A (IC(50)=9.6-33 nM). It inhibits activation of sodium channel by trapping the voltage sensor of domain II (DIIS4) in the closed configuration. The toxin neither shifts the Nav1.7/SCN9A activation curve nor modifies the slope factor. It does not slow fast-inactivation of hNav1.7/SCN9A channels. In addition, it has only a weak affinity for lipid membranes. This toxin also exists with a pyroglutamate at position 53. The sole difference observed between modified (mHwTx-IV) and unmodified toxins is that moderate or high depolarization voltages (200 mV) permit the unmodified toxin to dissociate, whereas mHwTx-IV toxin does not dissociate, even at high depolarization voltages. These data indicate that mHwTx-IV strongly binds to voltage sensor of sodium channel even at extreme depolarization voltages. This chain is Huwentoxin-IV, found in Cyriopagopus schmidti (Chinese bird spider).